The primary structure comprises 246 residues: Probable transcriptional regulatory protein HAPS_0943 (246 aa).

The protein belongs to the TACO1 family.

The protein resides in the cytoplasm. The protein is Probable transcriptional regulatory protein HAPS_0943 of Glaesserella parasuis serovar 5 (strain SH0165) (Haemophilus parasuis).